Consider the following 475-residue polypeptide: Ribulose bisphosphate carboxylase large chain (475 aa).

Positions 1-2 (MS) are excised as a propeptide. The residue at position 3 (Pro3) is an N-acetylproline. An N6,N6,N6-trimethyllysine modification is found at Lys14. Residues Asn123 and Thr173 each contribute to the substrate site. Lys175 functions as the Proton acceptor in the catalytic mechanism. Residue Lys177 coordinates substrate. Mg(2+) is bound by residues Lys201, Asp203, and Glu204. Lys201 carries the N6-carboxylysine modification. Residue His294 is the Proton acceptor of the active site. Residues Arg295, His327, and Ser379 each coordinate substrate.

Belongs to the RuBisCO large chain family. Type I subfamily. In terms of assembly, heterohexadecamer of 8 large chains and 8 small chains. It depends on Mg(2+) as a cofactor.

It localises to the plastid. The catalysed reaction is 2 (2R)-3-phosphoglycerate + 2 H(+) = D-ribulose 1,5-bisphosphate + CO2 + H2O. It catalyses the reaction D-ribulose 1,5-bisphosphate + O2 = 2-phosphoglycolate + (2R)-3-phosphoglycerate + 2 H(+). RuBisCO catalyzes two reactions: the carboxylation of D-ribulose 1,5-bisphosphate, the primary event in carbon dioxide fixation, as well as the oxidative fragmentation of the pentose substrate in the photorespiration process. Both reactions occur simultaneously and in competition at the same active site. This Aneura mirabilis (Parasitic liverwort) protein is Ribulose bisphosphate carboxylase large chain.